Reading from the N-terminus, the 235-residue chain is Maximins-S type A (235 aa).

A signal peptide spans 1–18 (MNFNYFILVLFFITSGHA). Propeptides lie at residues 19–35 (KSET…HIKR) and 52–65 (SAEE…LVKR). Asn83 carries the post-translational modification Asparagine amide. Positions 87-100 (SAEEQDLAEDLVTR) are excised as a propeptide. Asn118 is subject to Asparagine amide. A propeptide spanning residues 122-135 (SAEEQDLAEDLVKR) is cleaved from the precursor. The residue at position 153 (Asn153) is an Asparagine amide. Positions 157–170 (SAEEQDLAEDLVTR) are excised as a propeptide. The residue at position 188 (Lys188) is a Lysine amide. Positions 192-205 (SAEDQDLAEDLVTR) are excised as a propeptide. Lys223 carries the post-translational modification Lysine amide. Residues 227–235 (SAEQEKDMK) constitute a propeptide that is removed on maturation.

It belongs to the maximin-S family. As to expression, expressed by the skin dorsal glands.

Its subcellular location is the secreted. Its function is as follows. Maximin-S1 has no antimicrobial activity. Has no hemolytic activity. Maximin-S2 has an activity against mycoplasma but has no activity against common Gram-positive and Gram-negative bacteria nor fungi. Has no hemolytic activity. In terms of biological role, maximin-S3 has an activity against mycoplasma but has no activity against common Gram-positive and Gram-negative bacteria nor fungi. Has no hemolytic activity. Functionally, maximin-S4 has an activity against mycoplasma but has no activity against common Gram-positive and Gram-negative bacteria nor fungi. Has no hemolytic activity. Its function is as follows. Maximin-S5 has an activity against mycoplasma but has no activity against common Gram-positive and Gram-negative bacteria nor fungi. Has no hemolytic activity. This Bombina maxima (Giant fire-bellied toad) protein is Maximins-S type A.